The sequence spans 208 residues: Imidazole glycerol phosphate synthase subunit HisH (208 aa).

Residues 2–208 enclose the Glutamine amidotransferase type-1 domain; sequence NVTIVDYNSG…LKIIENFLNL (207 aa). C85 serves as the catalytic Nucleophile. Residues H190 and E192 contribute to the active site.

In terms of assembly, heterodimer of HisH and HisF.

It localises to the cytoplasm. The catalysed reaction is 5-[(5-phospho-1-deoxy-D-ribulos-1-ylimino)methylamino]-1-(5-phospho-beta-D-ribosyl)imidazole-4-carboxamide + L-glutamine = D-erythro-1-(imidazol-4-yl)glycerol 3-phosphate + 5-amino-1-(5-phospho-beta-D-ribosyl)imidazole-4-carboxamide + L-glutamate + H(+). It catalyses the reaction L-glutamine + H2O = L-glutamate + NH4(+). Its pathway is amino-acid biosynthesis; L-histidine biosynthesis; L-histidine from 5-phospho-alpha-D-ribose 1-diphosphate: step 5/9. In terms of biological role, IGPS catalyzes the conversion of PRFAR and glutamine to IGP, AICAR and glutamate. The HisH subunit catalyzes the hydrolysis of glutamine to glutamate and ammonia as part of the synthesis of IGP and AICAR. The resulting ammonia molecule is channeled to the active site of HisF. The protein is Imidazole glycerol phosphate synthase subunit HisH of Pelagibacter ubique (strain HTCC1062).